The sequence spans 146 residues: Mediator of RNA polymerase II transcription subunit 10 (146 aa).

This sequence belongs to the Mediator complex subunit 10 family. As to quaternary structure, component of the Mediator complex.

The protein resides in the nucleus. Functionally, component of the Mediator complex, a coactivator involved in the regulated transcription of nearly all RNA polymerase II-dependent genes. Mediator functions as a bridge to convey information from gene-specific regulatory proteins to the basal RNA polymerase II transcription machinery. Mediator is recruited to promoters by direct interactions with regulatory proteins and serves as a scaffold for the assembly of a functional preinitiation complex with RNA polymerase II and the general transcription factors. The sequence is that of Mediator of RNA polymerase II transcription subunit 10 (NUT2) from Scheffersomyces stipitis (strain ATCC 58785 / CBS 6054 / NBRC 10063 / NRRL Y-11545) (Yeast).